The chain runs to 605 residues: Probable potassium transport system protein Kup 2 (605 aa).

12 helical membrane passes run 17–37 (GLVF…IMTL), 45–65 (VLGI…VEYA), 96–116 (MAFA…DGVI), 139–159 (AQGG…IFQF), 169–189 (FGPI…VSII), 211–231 (GLAG…GEAL), 246–266 (AWYF…AFIL), 286–306 (LYIP…QALI), 338–358 (IYIG…MILF), 367–387 (AYGL…TMIF), 394–414 (WKVP…TANL), and 417–437 (LPHG…IMVI).

Belongs to the HAK/KUP transporter (TC 2.A.72) family.

The protein resides in the cell inner membrane. It carries out the reaction K(+)(in) + H(+)(in) = K(+)(out) + H(+)(out). In terms of biological role, transport of potassium into the cell. Likely operates as a K(+):H(+) symporter. This chain is Probable potassium transport system protein Kup 2, found in Geobacter sulfurreducens (strain ATCC 51573 / DSM 12127 / PCA).